Here is a 269-residue protein sequence, read N- to C-terminus: Growth-regulating factor 11 (269 aa).

Positions 1–11 are enriched in basic and acidic residues; it reads MAAEGEAKKDS. The segment at 1–71 is disordered; the sequence is MAAEGEAKKD…GKEDVEEGGV (71 aa). The segment covering 43–52 has biased composition (gly residues); that stretch reads GEAGGGGGGG. Acidic residues predominate over residues 58–68; the sequence is EEEEGKEDVEE. The QLQ domain maps to 114–149; sequence AFTAMQLQELEQQSRVYQYMAARVPVPTHLVFPIWK. A WRC domain is found at 180 to 224; that stretch reads EPEPGRCRRTDGKKWRCWRNAIANEKYCERHMHRGRKRPVQLVVE. Short sequence motifs (bipartite nuclear localization signal) lie at residues 185 to 195 and 213 to 217; these read RCRRTDGKKWR and RGRKR. Residues 212–269 are disordered; it reads HRGRKRPVQLVVEDDEPDSTSGSKPASGKATEGGKKTDDKSSSSKKLAVAAPAAVEST. A compositionally biased stretch (basic and acidic residues) spans 243–253; that stretch reads EGGKKTDDKSS. Residues 255–269 show a composition bias toward low complexity; sequence SKKLAVAAPAAVEST.

It belongs to the GRF family.

It localises to the nucleus. In terms of biological role, transcription activator that plays a regulatory role in gibberellin-induced stem elongation. The polypeptide is Growth-regulating factor 11 (GRF11) (Oryza sativa subsp. japonica (Rice)).